Consider the following 368-residue polypeptide: 3-dehydroquinate synthase (368 aa).

NAD(+) is bound by residues 99–103 (GVVGD), 123–124 (TT), Lys-136, and Lys-145. Zn(2+) contacts are provided by Glu-178, His-242, and His-259.

This sequence belongs to the sugar phosphate cyclases superfamily. Dehydroquinate synthase family. NAD(+) is required as a cofactor. Co(2+) serves as cofactor. Requires Zn(2+) as cofactor.

The protein resides in the cytoplasm. The enzyme catalyses 7-phospho-2-dehydro-3-deoxy-D-arabino-heptonate = 3-dehydroquinate + phosphate. Its pathway is metabolic intermediate biosynthesis; chorismate biosynthesis; chorismate from D-erythrose 4-phosphate and phosphoenolpyruvate: step 2/7. Its function is as follows. Catalyzes the conversion of 3-deoxy-D-arabino-heptulosonate 7-phosphate (DAHP) to dehydroquinate (DHQ). This chain is 3-dehydroquinate synthase, found in Chlorobaculum tepidum (strain ATCC 49652 / DSM 12025 / NBRC 103806 / TLS) (Chlorobium tepidum).